Here is a 734-residue protein sequence, read N- to C-terminus: Photosystem I P700 chlorophyll a apoprotein A2 (734 aa).

8 helical membrane-spanning segments follow: residues 46-69, 135-158, 175-199, 273-291, 330-353, 369-395, 417-439, and 517-535; these read IFAS…FHVA, LYTG…LHLQ, LNHH…HVAI, MAHH…GHMY, LHFQ…QHMY, AASY…IFFI, AIIS…LYVH, and FLVH…LILV. [4Fe-4S] cluster is bound by residues Cys559 and Cys568. The next 2 membrane-spanning stretches (helical) occupy residues 575–596 and 643–665; these read AFYL…YWHW and LSVW…MFLI. Residues His654, Met662, and Tyr670 each contribute to the chlorophyll a site. Trp671 lines the phylloquinone pocket. Residues 707-727 form a helical membrane-spanning segment; sequence LVGLAHFSVGYIFTYAAFLIA.

Belongs to the PsaA/PsaB family. As to quaternary structure, the PsaA/B heterodimer binds the P700 chlorophyll special pair and subsequent electron acceptors. PSI consists of a core antenna complex that captures photons, and an electron transfer chain that converts photonic excitation into a charge separation. The eukaryotic PSI reaction center is composed of at least 11 subunits. The cofactor is P700 is a chlorophyll a/chlorophyll a' dimer, A0 is one or more chlorophyll a, A1 is one or both phylloquinones and FX is a shared 4Fe-4S iron-sulfur center..

It is found in the plastid. The protein localises to the chloroplast thylakoid membrane. The catalysed reaction is reduced [plastocyanin] + hnu + oxidized [2Fe-2S]-[ferredoxin] = oxidized [plastocyanin] + reduced [2Fe-2S]-[ferredoxin]. PsaA and PsaB bind P700, the primary electron donor of photosystem I (PSI), as well as the electron acceptors A0, A1 and FX. PSI is a plastocyanin-ferredoxin oxidoreductase, converting photonic excitation into a charge separation, which transfers an electron from the donor P700 chlorophyll pair to the spectroscopically characterized acceptors A0, A1, FX, FA and FB in turn. Oxidized P700 is reduced on the lumenal side of the thylakoid membrane by plastocyanin. The chain is Photosystem I P700 chlorophyll a apoprotein A2 from Acorus calamus (Sweet flag).